We begin with the raw amino-acid sequence, 184 residues long: Adenine phosphoribosyltransferase (184 aa).

This sequence belongs to the purine/pyrimidine phosphoribosyltransferase family. Homodimer.

The protein localises to the cytoplasm. It carries out the reaction AMP + diphosphate = 5-phospho-alpha-D-ribose 1-diphosphate + adenine. The protein operates within purine metabolism; AMP biosynthesis via salvage pathway; AMP from adenine: step 1/1. Functionally, catalyzes a salvage reaction resulting in the formation of AMP, that is energically less costly than de novo synthesis. In Shewanella baltica (strain OS223), this protein is Adenine phosphoribosyltransferase.